The primary structure comprises 398 residues: MIVKAKFVKGFIRDVHPYGCRREVLNQIDYCKKAIGFRGPKKVLIVGASSGFGLATRISVAFGGPEAHTIGVSYETGATDRRIGTAGWYNNIFFKEFAKKKGLVAKNFIEDAFSNETKDKVIKYIKDEFGKIDLFVYSLAAPRRKDYKTGNVYTSRIKTILGDFEGPTIDVERDEITLKKVSSASIEEIEETRKVMGGEDWQEWCEELLYEDCFSDKATTIAYSYIGSPRTYKIYREGTIGIAKKDLEDKAKLINEKLNRVIGGRAFVSVNKALVTKASAYIPTFPLYAAILYKVMKEKNIHENCIMQIERMFSEKIYSNEKIQFDDKGRLRMDDLELRKDVQDEVDRIWSNITPENFKELSDYKGYKKEFMNLNGFDLDGVDYSKDLDIELLRKLEP.

NAD(+) contacts are provided by residues glycine 47–phenylalanine 52, tyrosine 74–glutamate 75, aspartate 111–alanine 112, and leucine 139–alanine 140. Tyrosine 225 contributes to the substrate binding site. Tyrosine 235 (proton donor) is an active-site residue. NAD(+)-binding positions include lysine 244 and leucine 274–threonine 276.

It belongs to the TER reductase family. As to quaternary structure, monomer.

It catalyses the reaction a 2,3-saturated acyl-CoA + NAD(+) = a (2E)-enoyl-CoA + NADH + H(+). Its pathway is lipid metabolism; fatty acid biosynthesis. In terms of biological role, involved in the fatty acid synthesis (FAS II). Catalyzes the reduction of the carbon-carbon double bond of crotonyl-CoA to yield butyryl-CoA. In Clostridium acetobutylicum (strain ATCC 824 / DSM 792 / JCM 1419 / IAM 19013 / LMG 5710 / NBRC 13948 / NRRL B-527 / VKM B-1787 / 2291 / W), this protein is Trans-2-enoyl-CoA reductase [NADH].